A 181-amino-acid chain; its full sequence is Ferritin heavy chain (181 aa).

N-acetylmethionine is present on Met-1. N-acetylthreonine; in Ferritin heavy chain, N-terminally processed is present on Thr-2. In terms of domain architecture, Ferritin-like diiron spans 11–160; it reads QNYHQDSEAA…DHITNLRKMG (150 aa). The Fe cation site is built by Glu-28, Glu-63, His-66, Glu-108, and Gln-142. At Ser-179 the chain carries Phosphoserine.

It belongs to the ferritin family. As to quaternary structure, oligomer of 24 subunits. There are two types of subunits: L (light) chain and H (heavy) chain. The major chain can be light or heavy, depending on the species and tissue type. The functional molecule forms a roughly spherical shell with a diameter of 12 nm and contains a central cavity into which the insoluble mineral iron core is deposited. Interacts with NCOA4; NCOA4 promotes targeting of the iron-binding ferritin complex to autolysosomes following starvation or iron depletion.

Its subcellular location is the cytoplasm. It localises to the lysosome. It is found in the cytoplasmic vesicle. The protein resides in the autophagosome. It catalyses the reaction 4 Fe(2+) + O2 + 4 H(+) = 4 Fe(3+) + 2 H2O. In terms of biological role, stores iron in a soluble, non-toxic, readily available form. Important for iron homeostasis. Has ferroxidase activity. Iron is taken up in the ferrous form and deposited as ferric hydroxides after oxidation. Also plays a role in delivery of iron to cells. Mediates iron uptake in capsule cells of the developing kidney. Delivery to lysosomes is mediated by the cargo receptor NCOA4 for autophagic degradation and release of iron. This chain is Ferritin heavy chain (FTH1), found in Bos taurus (Bovine).